The following is a 163-amino-acid chain: Probable cyclic pyranopterin monophosphate synthase (163 aa).

The tract at residues 1 to 23 (MPDGDDDALTHTTADGDAQMVDV) is disordered. Substrate is bound by residues 80–82 (MCH) and 116–117 (ME). The active site involves Asp-131.

Belongs to the MoaC family. Homohexamer; trimer of dimers.

It carries out the reaction (8S)-3',8-cyclo-7,8-dihydroguanosine 5'-triphosphate = cyclic pyranopterin phosphate + diphosphate. The protein operates within cofactor biosynthesis; molybdopterin biosynthesis. Catalyzes the conversion of (8S)-3',8-cyclo-7,8-dihydroguanosine 5'-triphosphate to cyclic pyranopterin monophosphate (cPMP). The protein is Probable cyclic pyranopterin monophosphate synthase of Halobacterium salinarum (strain ATCC 29341 / DSM 671 / R1).